We begin with the raw amino-acid sequence, 185 residues long: UPF0215 protein APE_0476.1 (185 aa).

Belongs to the UPF0215 family.

This chain is UPF0215 protein APE_0476.1, found in Aeropyrum pernix (strain ATCC 700893 / DSM 11879 / JCM 9820 / NBRC 100138 / K1).